Here is a 687-residue protein sequence, read N- to C-terminus: Chloride channel protein ClC-Ka (687 aa).

The next 4 membrane-spanning stretches (helical) occupy residues 52–72, 161–181, 202–222, and 236–256; these read FLMTLGVLMALISYAMNFALG, LFLGKVGPFVHLSVMIAAYLG, VAGAAVGVATVFAAPFSGVLF, and YWRGFFAATCGAFMFRLLAVF. Residues glutamate 259, glutamate 261, aspartate 278, and glutamate 281 each contribute to the Ca(2+) site. The next 6 helical transmembrane spans lie at 282 to 302, 325 to 345, 396 to 416, 417 to 437, 452 to 472, and 486 to 506; these read IFFFVLLGAICGVASCAYLYC, PLYAALAATVLASITYPPGVG, FTIFGTLAFFLVMKFWMLILA, TTIPMPAGYFLPIFIIGAAIG, IVAGGVINPIMPGGYALAGAA, and LLAFELTGQIVHALPVLMAVL. The Cytoplasmic segment spans residues 507-687; that stretch reads AANAIAQSCQ…SALTNPPPAK (181 aa). 2 consecutive CBS domains span residues 551 to 612 and 628 to 686; these read MRRA…ARAS and TEPV…PPPA.

Belongs to the chloride channel (TC 2.A.49) family. CLCNKA subfamily. As to quaternary structure, homodimer. Interacts with BSND. As to expression, expressed predominantly in the kidney.

Its subcellular location is the basolateral cell membrane. It catalyses the reaction chloride(in) = chloride(out). The enzyme catalyses bromide(in) = bromide(out). The catalysed reaction is nitrate(in) = nitrate(out). It carries out the reaction iodide(out) = iodide(in). Anion-selective channel permeable to small monovalent anions with ion selectivity for chloride &gt; bromide &gt; nitrate &gt; iodide. Forms a homodimeric channel where each subunit has its own ion conduction pathway. May conduct double-barreled currents controlled by two types of gates, two fast gates that control each subunit independently and a slow common gate that opens and shuts off both subunits simultaneously. Assembles with the regulatory subunit BSND/Barttin for sorting at the basolateral plasma membrane domain and functional switch to the ion conducting state. CLCNKA:BSND channels display mostly a linear current-voltage relationship with fast gating at negative potentials. Mediates transepithelial chloride transport from the lumen to interstitial compartment along the thin ascending limb of Henle's loop, contributing to generation of hypertonic medullary interstitium as a countercurrent system to achieve urine concentration. Conducts chloride currents in the stria vascularis of the inner ear to establish the endocochlear potential necessary for normal hearing. This is Chloride channel protein ClC-Ka (CLCNKA) from Oryctolagus cuniculus (Rabbit).